The sequence spans 477 residues: E3 ubiquitin-protein ligase TRIM17 (477 aa).

The segment at 16-66 (CSICLDYFTDPVMTTCGHNFCRACIQLSWEKARGKKGRRKRKGSFPCPECR) adopts an RING-type zinc-finger fold. The B box-type zinc-finger motif lies at 94-135 (QKQDLCQEHHEPLKLFCQKDQSPICVVCRESREHRLHRVLPA). 4 residues coordinate Zn(2+): cysteine 99, histidine 102, cysteine 121, and histidine 127. A coiled-coil region spans residues 135-223 (AEEAVQGYKL…TASRLRESVA (89 aa)). Positions 277-475 (PRTVCRVPGQ…MVISTVTMWV (199 aa)) constitute a B30.2/SPRY domain.

The protein belongs to the TRIM/RBCC family. In terms of assembly, interacts (via coiled coil) with TRIM44 (via coiled coil). Interacts with TRIM28; this interaction prevents TRIM28 activity on BCL2A1. Interacts with TRIM41; this interaction prevents TRIM41 activity on ZSCAN2. Interacts with BECN1. Interacts with NFATC3 and NFATC4; these interactions prevent NFATC3 and NFATC4 nuclear localization. In terms of processing, auto-ubiquitinated. In terms of tissue distribution, almost exclusively in the testis.

The protein resides in the cytoplasm. It is found in the lysosome. The catalysed reaction is S-ubiquitinyl-[E2 ubiquitin-conjugating enzyme]-L-cysteine + [acceptor protein]-L-lysine = [E2 ubiquitin-conjugating enzyme]-L-cysteine + N(6)-ubiquitinyl-[acceptor protein]-L-lysine.. It participates in protein modification; protein ubiquitination. Its function is as follows. E3 ubiquitin ligase that plays important roles in the regulation of neuronal apoptosis, selective autophagy or cell proliferation. Stimulates the degradation of kinetochore ZW10 interacting protein ZWINT in a proteasome-dependent manner, leading to negative regulation of cell proliferation. Inhibits autophagic degradation of diverse known targets while contributing to autophagy of midbodies. Autophagy-inhibitory activity involves MCL1, which TRIM17 assembles into complexes with the key autophagy regulator BECN1. Controls neuronal apoptosis by mediating ubiquitination and degradation of MCL1 to initiate neuronal death. In addition, regulates NFAT transcription factors NFATC3 and NFATC4 activities by preventing their nuclear localization, thus inhibiting their transcriptional activities. Decreases TRIM41-mediated degradation of ZSCAN2 thereby stimulating alpha-synuclein/SNCA transcription in neuronal cells. Prevents the E3 ubiquitin-ligase activity of TRIM28 and its interaction with anti-apoptotic BCL2A1, blocking TRIM28 from ubiquitinating BCL2A1. In Homo sapiens (Human), this protein is E3 ubiquitin-protein ligase TRIM17 (TRIM17).